The chain runs to 602 residues: Protein SHORT-ROOT 1 (602 aa).

Residues 12 to 55 show a composition bias toward low complexity; the sequence is AASEQQQQQQQSASYNSRSTTSSGSRSSSHQTNASYSYYHHSSN. Disordered stretches follow at residues 12–69, 101–145, and 165–185; these read AASE…YYYG, DFSS…TAAG, and DFSSPASSSGGGTASSGAVGG. Residues 56–68 are compositionally biased toward gly residues; that stretch reads SGGGGGGGGGYYY. A compositionally biased stretch (low complexity) spans 122-145; it reads PPASSTPTGTAPTPPLSTSSTAAG. Gly residues predominate over residues 173 to 185; the sequence is SGGGTASSGAVGG. Positions 183 to 601 constitute a GRAS domain; the sequence is VGGGGGGRWA…QPLVWASAWR (419 aa). Positions 190–253 are leucine repeat I (LRI); that stretch reads RWASQLLLEC…LTASGPRTLR (64 aa). A VHIID region spans residues 272-349; sequence ALRFQELSPW…PHLSITTVVS (78 aa). The VHIID signature appears at 311 to 315; the sequence is FHILD. Residues 365 to 401 are leucine repeat II (LRII); sequence EIGQRMEKFARLMGVPFRFRAVHHSGDLAELDLDALD. The interval 411-517 is PFYRE; that stretch reads LAVNCVNSLR…ERGAGRAIVD (107 aa). The segment at 520-601 is SAW; sequence SCPASESMER…QPLVWASAWR (82 aa).

This sequence belongs to the GRAS family. As to quaternary structure, interacts with SCR1. Interacts with SMOS1. Expressed in leaves and roots. Detected in the stele, the endodermis and part of the cortex.

The protein localises to the nucleus. In terms of biological role, transcription factor required for the asymmetric cell division involved in radial pattern formation in roots. Essential for both cell division and cell specification. The sequence is that of Protein SHORT-ROOT 1 from Oryza sativa subsp. japonica (Rice).